A 164-amino-acid chain; its full sequence is Cell cycle link protein (164 aa).

The binding to host SKP1 protein stretch occupies residues 9 to 22 (LPEELKEKIMNEHL). An LXCXE motif, interaction with host RBR motif is present at residues 111–115 (LYCSE).

The protein belongs to the nanovirus Clink protein family. In terms of assembly, interacts with host SKP1. Interacts (via LXCXE domain) with host retinoblastoma-related protein 1 (RBR1). Interacts (via LXCXE domain) with retinoblastoma-related proteins (RBR).

Functionally, interacts with and disrupts the function of host retinoblastoma-related proteins RBR, which are key regulators of the cell cycle. Induces transcriptional activation of E2F-regulated S-phase and G2/M-phase-specific genes. Inactivation of the ability of RBR to arrest the cell cycle leads to the stimulation of viral DNA replication. The sequence is that of Cell cycle link protein (DNA-C) from Trifolium subterraneum (Subterranean clover).